The sequence spans 168 residues: Disulfide bond formation protein B 1 (168 aa).

Residues 1 to 14 (MNELTSRLNRERRF) lie on the Cytoplasmic side of the membrane. A helical transmembrane segment spans residues 15-31 (LVLLGVICLALIGGALY). The Periplasmic segment spans residues 32-49 (MQVVLGEAPCPLCILQRY). Cysteines 41 and 44 form a disulfide. A helical transmembrane segment spans residues 50–65 (ALLFIAIFAFIAAAMP). Residues 66 to 72 (GRKSLTF) lie on the Cytoplasmic side of the membrane. The chain crosses the membrane as a helical span at residues 73 to 89 (FEVLVVLSAIGGIVAAG). The Periplasmic portion of the chain corresponds to 90 to 144 (NHVYILANPMVSCGIDTLQPIVDDLPLAKLWPLAFQVDGFCSTPYPPILGLSLAQ). Cysteine 102 and cysteine 130 form a disulfide bridge. A helical membrane pass occupies residues 145–163 (WALVAFVLTTVLVPLGIYR). At 164 to 168 (NRRRG) the chain is on the cytoplasmic side.

It belongs to the DsbB family.

It is found in the cell inner membrane. Its function is as follows. Required for disulfide bond formation in some periplasmic proteins. Acts by oxidizing the DsbA protein. The protein is Disulfide bond formation protein B 1 of Pseudomonas entomophila (strain L48).